Consider the following 142-residue polypeptide: Hemoglobin subunit alpha-2 (142 aa).

Positions 2–142 (LLTADDKKHI…VSSVLTSKYR (141 aa)) constitute a Globin domain. Histidine 59 contacts O2. Heme b is bound at residue histidine 88.

This sequence belongs to the globin family. Heterotetramer of two alpha chains and two beta chains. In terms of tissue distribution, red blood cells.

Its function is as follows. Involved in oxygen transport from the lung to the various peripheral tissues. The polypeptide is Hemoglobin subunit alpha-2 (hba2) (Xenopus borealis (Kenyan clawed frog)).